Reading from the N-terminus, the 122-residue chain is Flagellar protein FliT (122 aa).

Residues Met1–Lys50 are required for homodimerization. Residues Ile60 to Arg98 form a fliD binding region.

Belongs to the FliT family. As to quaternary structure, homodimer. Interacts with FliD and FlhC.

The protein resides in the cytoplasm. It localises to the cytosol. Dual-function protein that regulates the transcription of class 2 flagellar operons and that also acts as an export chaperone for the filament-capping protein FliD. As a transcriptional regulator, acts as an anti-FlhDC factor; it directly binds FlhC, thus inhibiting the binding of the FlhC/FlhD complex to class 2 promoters, resulting in decreased expression of class 2 flagellar operons. As a chaperone, effects FliD transition to the membrane by preventing its premature polymerization, and by directing it to the export apparatus. The chain is Flagellar protein FliT from Salmonella schwarzengrund (strain CVM19633).